The sequence spans 34 residues: Protamine (34 aa).

The segment at 1 to 34 (PRRRRQASRPVRRRRRTRRSTAERRRRRVVRRRR) is disordered.

Testis.

The protein localises to the nucleus. The protein resides in the chromosome. Functionally, protamines substitute for histones in the chromatin of sperm during the haploid phase of spermatogenesis. They compact sperm DNA into a highly condensed, stable and inactive complex. The polypeptide is Protamine (Dicentrarchus labrax (European seabass)).